The sequence spans 155 residues: Dau c 1 isoallergen Dau c 1.0401 (155 aa).

It belongs to the BetVI family. Monomer. Expressed in roots (at protein level). Expressed in roots.

The polypeptide is Dau c 1 isoallergen Dau c 1.0401 (Daucus carota subsp. sativus (Carrot)).